The chain runs to 587 residues: Trihelix transcription factor GTL1 (587 aa).

Composition is skewed to gly residues over residues 1–10 (MEQGGGGGGN) and 41–54 (GGLG…GGGS). The segment at 1–63 (MEQGGGGGGN…SASSSSGNRW (63 aa)) is disordered. A Myb-like 1 domain is found at 55–119 (ASSSSGNRWP…KCKEKFENVQ (65 aa)). The short motif at 96-103 (SRKLLELG) is the Nuclear localization signal 1 element. Residues 173–194 (SSSPFPVFSQPQPQTQTQPPQT) are compositionally biased toward low complexity. The interval 173–264 (SSSPFPVFSQ…RKRGNRGGGG (92 aa)) is disordered. The segment covering 201–210 (PTPPPLPLPS) has biased composition (pro residues). The segment covering 221-232 (SSHSSSTASGMG) has biased composition (low complexity). Acidic residues predominate over residues 233 to 242 (SDDDDDDMDV). Residues 285–328 (QRSFLEALEKREQERLDREEAWKRQEMARLAREHEVMSQERAAS) are a coiled coil. Positions 348–435 (QLPPSLSSQP…EQSSLPSSSR (88 aa)) are disordered. Residues 356 to 366 (QPPPPYQPPPA) are compositionally biased toward pro residues. Composition is skewed to low complexity over residues 379-395 (AQSQ…QQQI) and 411-434 (QKQQ…PSSS). The Myb-like 2 domain maps to 434 to 492 (SRWPKAEILALINLRSGMEPRYQDNVPKGLLWEEISTSMKRMGYNRNAKRCKEKWENIN). Positions 472–479 (MKRMGYNR) match the Nuclear localization signal 2 motif. Residues 530–587 (GGGSSTSGLPQDQKQSPVTAMKPPQEGLVNVQQTHGSASTEEEEPIEESPQGTEKKTL) form a disordered region. Polar residues-rich tracts occupy residues 538–547 (LPQDQKQSPV) and 559–568 (NVQQTHGSAS).

Mostly expressed in siliques, and, to a lower extent, in growing root hairs, leaves, stems, and flowers. Present in abaxial epidermal cells, predominantly in guard cells, pavement cells, and meristemoids.

It localises to the nucleus. Transcription repressor that binds specific DNA sequence such as GT3 box 5'-GGTAAA-3' in the SDD1 promoter. Negative regulator of water use efficiency (WUE) via the promotion of stomatal density and distribution by the transcription repression of SDD1. Regulates the expression of several cell cycle genes and endoreduplication, especially in trichomes where it prevents ploidy-dependent plant cell growth. Regulates negatively root hair growth by directly binding RSL4 promoter and repressing RSL4 expression. This Arabidopsis thaliana (Mouse-ear cress) protein is Trihelix transcription factor GTL1.